Consider the following 328-residue polypeptide: DNA-directed RNA polymerase subunit alpha (328 aa).

An alpha N-terminal domain (alpha-NTD) region spans residues 1 to 234; it reads MVREKVKVST…DLFIPFLQAE (234 aa). The alpha C-terminal domain (alpha-CTD) stretch occupies residues 268–328; that stretch reads IALKSIFIDQ…KQIMSILEKK (61 aa).

Belongs to the RNA polymerase alpha chain family. In terms of assembly, in plastids the minimal PEP RNA polymerase catalytic core is composed of four subunits: alpha, beta, beta', and beta''. When a (nuclear-encoded) sigma factor is associated with the core the holoenzyme is formed, which can initiate transcription.

The protein resides in the plastid. Its subcellular location is the chloroplast. The enzyme catalyses RNA(n) + a ribonucleoside 5'-triphosphate = RNA(n+1) + diphosphate. DNA-dependent RNA polymerase catalyzes the transcription of DNA into RNA using the four ribonucleoside triphosphates as substrates. The chain is DNA-directed RNA polymerase subunit alpha from Citrus sinensis (Sweet orange).